Reading from the N-terminus, the 361-residue chain is PTI1-like tyrosine-protein kinase 1 (361 aa).

The segment at 16 to 43 is disordered; the sequence is EEQQLKSSQQQSDANHKNSKPAPVAKHE. The Protein kinase domain maps to 68–350; sequence FGSKALIGEG…IVVKALQPLL (283 aa). ATP is bound by residues 74–82 and Lys96; that span reads IGEGSYGRV. Catalysis depends on Asp200, which acts as the Proton acceptor.

Belongs to the protein kinase superfamily. Tyr protein kinase family. In terms of assembly, interacts with OXI1. In terms of processing, autophosphorylated and phosphorylated by OXI1.

The protein localises to the cell membrane. It catalyses the reaction L-tyrosyl-[protein] + ATP = O-phospho-L-tyrosyl-[protein] + ADP + H(+). In Arabidopsis thaliana (Mouse-ear cress), this protein is PTI1-like tyrosine-protein kinase 1 (PTI11).